The primary structure comprises 185 residues: TATA-box-binding protein 3 (185 aa).

2 tandem repeats follow at residues 7–84 and 100–178.

The protein belongs to the TBP family.

General factor that plays a role in the activation of archaeal genes transcribed by RNA polymerase. Binds specifically to the TATA box promoter element which lies close to the position of transcription initiation. In Methanosarcina mazei (strain ATCC BAA-159 / DSM 3647 / Goe1 / Go1 / JCM 11833 / OCM 88) (Methanosarcina frisia), this protein is TATA-box-binding protein 3.